Here is a 156-residue protein sequence, read N- to C-terminus: Endogenous retrovirus group K member 113 Pro protein (156 aa).

One can recognise a Peptidase A2 domain in the interval 21-96 (FEGLVDTGAD…IPLNLWGRDL (76 aa)). The active site involves Asp26. In terms of domain architecture, G-patch spans 111–156 (YSPTSQKIMTKMGYIPGKGLGKNEDGIKIPVEAKINQKREGIGYPF).

The protein belongs to the peptidase A2 family. HERV class-II K(HML-2) subfamily. As to quaternary structure, active as a homodimer. Post-translationally, autoproteolytically processed at the N-terminus. Expected C-terminal autoprocessing not detected. The sequence shown is that of the processed Pro protein.

The enzyme catalyses Processing at the authentic HIV-1 PR recognition site and release of the mature p17 matrix and the p24 capsid protein, as a result of the cleavage of the -SQNY-|-PIVQ- cleavage site.. In terms of biological role, retroviral proteases have roles in the processing of the primary translation products and the maturation of the viral particle. Endogenous Pro proteins may have kept, lost or modified their original function during evolution. The protein is Endogenous retrovirus group K member 113 Pro protein (HERVK_113) of Homo sapiens (Human).